The following is a 359-amino-acid chain: Beta-1,3-galactosyltransferase bre-2 (359 aa).

The Cytoplasmic portion of the chain corresponds to 1-11 (MRQSRRASSRV). A helical; Signal-anchor for type II membrane protein transmembrane segment spans residues 12–29 (NRLVVIFIIVASGFLLLY). Over 30–359 (KNTQQFTQID…NPDLEELKEK (330 aa)) the chain is Lumenal. Asn-73, Asn-163, and Asn-209 each carry an N-linked (GlcNAc...) asparagine glycan.

This sequence belongs to the glycosyltransferase 31 family.

The protein localises to the golgi apparatus membrane. It functions in the pathway protein modification; protein glycosylation. Its function is as follows. Transfers N-acetylgalactosamine onto carbohydrate substrates. Involved in susceptibility to pore-forming crystal toxins in conjunction with bre-1, bre-3, bre-4, and bre-5. Involved in resistance to the nematotoxic C.cinerea galectin Cgl2. This is Beta-1,3-galactosyltransferase bre-2 from Caenorhabditis elegans.